A 379-amino-acid polypeptide reads, in one-letter code: Guanine nucleotide-binding protein G(s) subunit alpha (379 aa).

A disordered region spans residues 1–25 (MGCLGNSKTEDQRNEEKVQRETNKK). G2 carries the N-palmitoyl glycine lipid modification. C3 carries the S-palmitoyl cysteine lipid modification. Residues 8–25 (KTEDQRNEEKVQRETNKK) show a composition bias toward basic and acidic residues. A G-alpha domain is found at 39-379 (ATHRLLLLGA…RMHLRQYELL (341 aa)). The G1 motif stretch occupies residues 42–55 (RLLLLGAGESGKSS). Residues 47–55 (GAGESGKSS), 182–189 (LLRCRVLT), 208–212 (DVGGQ), 277–280 (NKQD), and A351 contribute to the GTP site. 2 residues coordinate Mg(2+): S54 and T189. The G2 motif stretch occupies residues 181–189 (DLLRCRVLT). The G3 motif stretch occupies residues 204-213 (FHMFDVGGQR). Positions 273 to 280 (ILFLNKQD) are G4 motif. The segment at 349 to 354 (TCAVDT) is G5 motif.

The protein belongs to the G-alpha family. G(s) subfamily. In terms of assembly, heterotrimeric G proteins are composed of 3 units; alpha, beta and gamma. The alpha chain contains the guanine nucleotide binding site.

It is found in the cell membrane. Functionally, guanine nucleotide-binding proteins (G proteins) function as transducers in numerous signaling pathways controlled by G protein-coupled receptors (GPCRs). Signaling involves the activation of adenylyl cyclases, resulting in increased levels of the signaling molecule cAMP. GNAS functions downstream of several GPCRs, including beta-adrenergic receptors. Stimulates the Ras signaling pathway. This chain is Guanine nucleotide-binding protein G(s) subunit alpha (gnas), found in Xenopus laevis (African clawed frog).